The following is a 179-amino-acid chain: Large ribosomal subunit protein uL6 (179 aa).

This sequence belongs to the universal ribosomal protein uL6 family. Part of the 50S ribosomal subunit.

In terms of biological role, this protein binds to the 23S rRNA, and is important in its secondary structure. It is located near the subunit interface in the base of the L7/L12 stalk, and near the tRNA binding site of the peptidyltransferase center. This is Large ribosomal subunit protein uL6 from Syntrophotalea carbinolica (strain DSM 2380 / NBRC 103641 / GraBd1) (Pelobacter carbinolicus).